A 99-amino-acid chain; its full sequence is Turripeptide OL71 (99 aa).

Contains 5 disulfide bonds. As to expression, expressed by the venom duct.

The protein resides in the secreted. Acts as a neurotoxin by inhibiting an ion channel. This Iotyrris olangoensis (Sea snail) protein is Turripeptide OL71.